A 261-amino-acid chain; its full sequence is Claudin-18 (261 aa).

The Cytoplasmic segment spans residues 1 to 6; the sequence is MSTTRC. Residues 7-27 form a helical membrane-spanning segment; that stretch reads QVVGFLLSILGLAGCIVATEM. Topologically, residues 28-80 are extracellular; the sequence is DMWSTQDLYDNPVTAVFQYEGLWRSCVQQSSGFTECRPYLTILGLPAMLQAVR. The chain crosses the membrane as a helical span at residues 81–101; the sequence is ALMIVGIVLSVIGLLVAIFAL. Residues 102-122 are Cytoplasmic-facing; that stretch reads KCIRMGNMDDSAKAKMTLTSG. Residues 123–143 form a helical membrane-spanning segment; the sequence is IMFIIAGLCAIAGVSVFANML. Topologically, residues 144–174 are extracellular; the sequence is VTNFWMSTASMFTSMGGMVQTVQTRYTFGAA. The helical transmembrane segment at 175–195 threads the bilayer; that stretch reads LFVGWVAGGLTLIGGVLMCIA. The tract at residues 195 to 261 is required for role in regulation of RANKL-induced osteoclast differentiation; it reads ACRGLAPEET…QSPPSKYDYV (67 aa). Residues 196-261 lie on the Cytoplasmic side of the membrane; it reads CRGLAPEETN…QSPPSKYDYV (66 aa). Ser214 carries the phosphoserine modification. The segment at 228–261 is disordered; that stretch reads SSGFESNTRNKKIYDGGARTEDEGQSPPSKYDYV. Positions 239-249 are enriched in basic and acidic residues; it reads KIYDGGARTED.

This sequence belongs to the claudin family. In terms of assembly, interacts with TJP2/ZO-2. Interacts with TJP1/ZO-1. Interacts with YAP1 (phosphorylated); the interaction sequesters YAP1 away from the nucleus and thereby restricts transcription of YAP1 target genes. Interacts with CLDN19.

The protein resides in the cell junction. The protein localises to the tight junction. It is found in the cell membrane. Its function is as follows. Involved in alveolar fluid homeostasis via regulation of alveolar epithelial tight junction composition and therefore ion transport and solute permeability, potentially via downstream regulation of the actin cytoskeleton organization and beta-2-adrenergic signaling. Required for lung alveolarization and maintenance of the paracellular alveolar epithelial barrier. Acts to maintain epithelial progenitor cell proliferation and organ size, via regulation of YAP1 localization away from the nucleus and thereby restriction of YAP1 target gene transcription. Acts as a negative regulator of RANKL-induced osteoclast differentiation, potentially via relocation of TJP2/ZO-2 away from the nucleus, subsequently involved in bone resorption in response to calcium deficiency. Mediates the osteoprotective effects of estrogen, potentially via acting downstream of estrogen signaling independently of RANKL signaling pathways. This Bos taurus (Bovine) protein is Claudin-18 (CLDN18).